A 570-amino-acid chain; its full sequence is MKLADFVTYVFGSLLAGLVTLKVLSSFIPSLLVTLPAKVRLRVNNSLLKCSNNLNRIPVLDFGWKNSSVRRAFILASERPSDYTNKIYGDRVHIAYNDRIKRESFVNKLGFDSKRKLLGFFHPYCNAGGGGEKVLWKAVETSLNQDKNNICVIYTGDTDVNGSDILNSVRRRFEYDLDSDRIVFIFLQKRRLVESKSWPKFTLLGQAYGSIILSIEALTTLAPDYWIDTMGYPFAYPFVSLFARIPIVTYTHYPVISTDMLQKLKTMPGFHTNFKLIGKYVYWKIFMLAYKFSGLFVEIASTNSTWTYNHIKSIWSSTKNIHIIYPPCSTESLIEGCDKSDPVKRLNQAVVIAQFRPEKRHELILSSFSSFIDATTKKDLIPKIIFIGSTRNVEDREYVETLKKYAFEALKIPTHLVDFKTDCKYDDMKSILYSSWFGINAMWNEHFGIAVVEYMASGLIPLCHASAGPLYDIVVPWDSKKNEQSTDKANETGFFFIDETDPDFLAKDSSKYSSLRTLFAQVSKLNTVQRIDISNRAKMCSLSKFSDSEFERSWNEVLEELNLTHNRMFS.

Over 1 to 7 the chain is Lumenal; it reads MKLADFV. A helical membrane pass occupies residues 8–70; sequence TYVFGSLLAG…DFGWKNSSVR (63 aa). The Cytoplasmic segment spans residues 71–200; that stretch reads RAFILASERP…RLVESKSWPK (130 aa). Residues 201 to 221 constitute an intramembrane region (helical); the sequence is FTLLGQAYGSIILSIEALTTL. The Cytoplasmic segment spans residues 222–446; that stretch reads APDYWIDTMG…FGINAMWNEH (225 aa). An intramembrane region (helical) is located at residues 447–467; that stretch reads FGIAVVEYMASGLIPLCHASA. Over 468-570 the chain is Cytoplasmic; that stretch reads GPLYDIVVPW…LNLTHNRMFS (103 aa).

It belongs to the glycosyltransferase group 1 family.

Its subcellular location is the endoplasmic reticulum membrane. It catalyses the reaction an alpha-D-Man-(1-&gt;3)-[alpha-D-Man-(1-&gt;6)]-beta-D-Man-(1-&gt;4)-beta-D-GlcNAc-(1-&gt;4)-alpha-D-GlcNAc-diphospho-di-trans,poly-cis-dolichol + 2 GDP-alpha-D-mannose = an alpha-D-Man-(1-&gt;2)-alpha-D-Man-(1-&gt;2)-alpha-D-Man-(1-&gt;3)-[alpha-D-Man-(1-&gt;6)]-beta-D-Man-(1-&gt;4)-beta-D-GlcNAc-(1-&gt;4)-alpha-D-GlcNAc-diphospho-di-trans,poly-cis-dolichol + 2 GDP + 2 H(+). It functions in the pathway protein modification; protein glycosylation. Its function is as follows. GDP-Man:Man(3)GlcNAc(2)-PP-Dol alpha-1,2-mannosyltransferase that operates in the biosynthetic pathway of dolichol-linked oligosaccharides, the glycan precursors employed in protein asparagine (N)-glycosylation. The assembly of dolichol-linked oligosaccharides begins on the cytosolic side of the endoplasmic reticulum membrane and finishes in its lumen. The sequential addition of sugars to dolichol pyrophosphate produces dolichol-linked oligosaccharides containing fourteen sugars, including two GlcNAcs, nine mannoses and three glucoses. Once assembled, the oligosaccharide is transferred from the lipid to nascent proteins by oligosaccharyltransferases. Catalyzes, on the cytoplasmic face of the endoplasmic reticulum, the addition of the fourth and fifth mannose residues to the dolichol-linked oligosaccharide chain, to produce Man(5)GlcNAc(2)-PP-dolichol core oligosaccharide. This chain is GDP-Man:Man(3)GlcNAc(2)-PP-Dol alpha-1,2-mannosyltransferase (ALG11), found in Kluyveromyces lactis (strain ATCC 8585 / CBS 2359 / DSM 70799 / NBRC 1267 / NRRL Y-1140 / WM37) (Yeast).